A 524-amino-acid chain; its full sequence is Lysine--tRNA ligase (524 aa).

Positions 39–47 (ASGIPHMGS) match the 'HIGH' region motif. A 'KMSKS' region motif is present at residues 294-298 (KISKS). K297 is a binding site for ATP.

It belongs to the class-I aminoacyl-tRNA synthetase family.

It localises to the cytoplasm. It carries out the reaction tRNA(Lys) + L-lysine + ATP = L-lysyl-tRNA(Lys) + AMP + diphosphate. In Cenarchaeum symbiosum, this protein is Lysine--tRNA ligase (lysS).